Here is a 211-residue protein sequence, read N- to C-terminus: Outer-membrane lipoprotein carrier protein (211 aa).

The N-terminal stretch at 1–24 is a signal peptide; the sequence is MRNRIIVSACAALAMFAIQAPAHA.

Belongs to the LolA family. In terms of assembly, monomer.

It localises to the periplasm. In terms of biological role, participates in the translocation of lipoproteins from the inner membrane to the outer membrane. Only forms a complex with a lipoprotein if the residue after the N-terminal Cys is not an aspartate (The Asp acts as a targeting signal to indicate that the lipoprotein should stay in the inner membrane). This chain is Outer-membrane lipoprotein carrier protein, found in Cupriavidus necator (strain ATCC 17699 / DSM 428 / KCTC 22496 / NCIMB 10442 / H16 / Stanier 337) (Ralstonia eutropha).